Reading from the N-terminus, the 502-residue chain is Cysteine protease RavZ (502 aa).

2 short sequence motifs (LIR) span residues 9–23 (DKLI…GEQE) and 23–37 (ESDI…GDEK). The segment at 49 to 325 (SIYPPETSWE…ESALTEGKTL (277 aa)) is catalytic region. Catalysis depends on residues H176 and D197. The interval 211–217 (YFKGKYR) is alpha-3 helix. C258 is an active-site residue. Residues 326–431 (PVQLSEFIVA…VLPCVKFDDT (106 aa)) are membrane targeting region. The short motif at 429–443 (DDTIDDFVTIEKDEL) is the LIR 3 element.

Its subcellular location is the secreted. The protein localises to the host cytoplasmic vesicle membrane. It catalyses the reaction [protein]-C-terminal L-amino acid-glycyl-phosphatidylethanolamide + H2O = a 1,2-diacyl-sn-glycero-3-phosphoethanolamine-N-glycine + [protein]-C-terminal &lt;stereo&gt;L-&lt;/stereo&gt;amino acid. The enzyme catalyses [protein]-C-terminal L-amino acid-glycyl-phosphatidylserine + H2O = 1,2-diacyl-sn-glycero-3-phospho-L-serine-N-glycine + [protein]-C-terminal &lt;stereo&gt;L-&lt;/stereo&gt;amino acid. Its function is as follows. Cysteine protease effector that inhibits host cell autophagy by targeting lipid-conjugated ATG8 family proteins on pre-autophagosomal structures. Specifically hydrolyzes the amide bond between the C-terminal glycine residue and an adjacent aromatic residue in ATG8 proteins conjugated to phosphatidylethanolamine (PE), producing an ATG8 protein that cannot be reconjugated by host ATG7 and ATG3. Mechanistically, Ravz interacts with ATG8 proteins conjugated to PE via its LIR motifs, extracts them from the membrane of autophagosomes and integrates the PE part into its own lipid-binding site. It then removes the lipid component of the ATG8 protein. Also able to mediate delipidation of ATG8 proteins conjugated to phosphatidylserine (PS) during non-canonical autophagy. Inhibits host ubiquitin recruitment to bacteria-containing vacuoles, suggesting that it is able to mediate delipidation of other proteins in addition to ATG8 proteins. It is however not involved in the exclusion of autophagy adapters from bacteria-containing vacuoles decorated with ubiquitin. The protein is Cysteine protease RavZ of Legionella pneumophila subsp. pneumophila (strain Philadelphia 1 / ATCC 33152 / DSM 7513).